Consider the following 857-residue polypeptide: Blue light receptor lreA (857 aa).

PAS domains follow at residues 306-328 (IIYV…VGQN), 479-542 (LVEN…TTTD), and 608-642 (LSKS…DLMD). The GATA-type zinc finger occupies 811 to 836 (CAICQTKKTPEWRRGPSGERDLCNSC).

Its function is as follows. Transcription factor that acts as a blue light sensor. Plays crucial roles in fungal growth and asexual development. Involved in conidiophore formation, sclerotium production, and conidial stress tolerance. Promotes conidiation by inducing the expression of brlA and abaA. Positively regulates the fungal pathogenicity towards maize. In blue light conditions, inhibits aflatoxin B1 (AFB1) biosynthesis by down-regulating the expression of key genes such as aflA, aflJ, aflH, aflO and aflK. The polypeptide is Blue light receptor lreA (Aspergillus flavus).